A 371-amino-acid polypeptide reads, in one-letter code: Cell division control protein 3 (371 aa).

A Septin-type G domain is found at 22-307; the sequence is AGIDFNIMTV…DEYKTREIGL (286 aa). A G1 motif region spans residues 32-39; that stretch reads GSNGLGKS. Residues 32–39, G116, 195–203, and R257 each bind GTP; these read GSNGLGKS and KSDLLSDSE. Residues 113-116 form a G3 motif region; the sequence is EVDG. The G4 motif stretch occupies residues 194 to 197; it reads GKSD.

Belongs to the TRAFAC class TrmE-Era-EngA-EngB-Septin-like GTPase superfamily. Septin GTPase family. In terms of assembly, component of the septin complex.

In terms of biological role, septins are GTPases involved in cytokinesis. The septins localize to the site of cleavage and act as a structural scaffold that recruits different components involved in diverse processes at specific stages during the cell cycle. Septins are also involved in cell morphogenesis, chitin deposition, cell cycle regulation, cell compartmentalization and spore wall formation. This chain is Cell division control protein 3 (CDC3), found in Encephalitozoon cuniculi (strain GB-M1) (Microsporidian parasite).